Reading from the N-terminus, the 272-residue chain is HMP-PP phosphatase (272 aa).

Asp-8 (nucleophile) is an active-site residue. Mg(2+) contacts are provided by Asp-8, Asp-10, and Asp-212.

The protein belongs to the HAD-like hydrolase superfamily. Cof family. The cofactor is Mg(2+).

The catalysed reaction is 4-amino-2-methyl-5-(diphosphooxymethyl)pyrimidine + H2O = 4-amino-2-methyl-5-(phosphooxymethyl)pyrimidine + phosphate + H(+). Catalyzes the hydrolysis of 4-amino-2-methyl-5-hydroxymethylpyrimidine pyrophosphate (HMP-PP) to 4-amino-2-methyl-5-hydroxymethylpyrimidine phosphate (HMP-P). The sequence is that of HMP-PP phosphatase from Salmonella enteritidis PT4 (strain P125109).